The primary structure comprises 247 residues: HTH-type transcriptional regulator SarU (247 aa).

2 consecutive DNA-binding regions (H-T-H motif) follow at residues 53 to 76 and 178 to 201; these read LKEI…SLSK and LKDL…RLNN.

Belongs to the SarA family.

The protein localises to the cytoplasm. In terms of biological role, positive regulator of RNAII and RNAIII in a cell density-dependent manner. It can contribute to the expression of virulence genes controlled by agr. May also regulate target genes via an agr-independent pathway. This Staphylococcus aureus (strain NCTC 8325 / PS 47) protein is HTH-type transcriptional regulator SarU (sarU).